The following is a 202-amino-acid chain: Small ribosomal subunit protein uS4 (202 aa).

The tract at residues 18–42 (LPGLTRKAAKRSYPPGQHGQARRKR) is disordered. The 63-residue stretch at 90–152 (NRLDNVCFRL…KPSKKLAETN (63 aa)) folds into the S4 RNA-binding domain.

It belongs to the universal ribosomal protein uS4 family. Part of the 30S ribosomal subunit. Contacts protein S5. The interaction surface between S4 and S5 is involved in control of translational fidelity.

One of the primary rRNA binding proteins, it binds directly to 16S rRNA where it nucleates assembly of the body of the 30S subunit. Functionally, with S5 and S12 plays an important role in translational accuracy. The sequence is that of Small ribosomal subunit protein uS4 from Synechococcus sp. (strain RCC307).